A 438-amino-acid polypeptide reads, in one-letter code: sn-glycerol-3-phosphate-binding periplasmic protein UgpB (438 aa).

An N-terminal signal peptide occupies residues 1-23 (MKPLHYTASALALGLALMGNAQA). 7 residues coordinate sn-glycerol 3-phosphate: Y65, E89, S144, S270, G307, Y346, and R397.

It belongs to the bacterial solute-binding protein 1 family. In terms of assembly, the complex is composed of two ATP-binding proteins (UgpC), two transmembrane proteins (UgpA and UgpE) and a solute-binding protein (UgpB).

The protein resides in the periplasm. Functionally, part of the ABC transporter complex UgpBAEC involved in sn-glycerol-3-phosphate (G3P) import. Binds G3P. The sequence is that of sn-glycerol-3-phosphate-binding periplasmic protein UgpB (ugpB) from Escherichia coli O157:H7.